The following is a 59-amino-acid chain: Embryonic testis differentiation protein homolog C (59 aa).

Residues 1–22 are disordered; the sequence is MDKELPKASPSEPALNIKKSGK.

This Homo sapiens (Human) protein is Embryonic testis differentiation protein homolog C.